The primary structure comprises 351 residues: Minor outer capsid protein P9 (351 aa).

A disordered region spans residues 246-308 (GVPAALPQPD…KAVPSGNVSA (63 aa)). Residues 285 to 297 (MIRKKVETSKDAP) are compositionally biased toward basic and acidic residues.

The protein belongs to the phytoreovirus minor outer capsid protein P9 family.

It is found in the virion. The protein resides in the host cytoplasm. Minor outer capsid protein. In Rice dwarf virus (isolate O) (RDV), this protein is Minor outer capsid protein P9.